Here is an 81-residue protein sequence, read N- to C-terminus: Photosystem I iron-sulfur center (81 aa).

4Fe-4S ferredoxin-type domains follow at residues 2–31 and 37–68; these read SHSV…MVPW and GQIA…VRVY. The [4Fe-4S] cluster site is built by C11, C14, C17, C21, C48, C51, C54, and C58.

The cyanobacterial PSI reaction center is composed of one copy each of PsaA,B,C,D,E,F,I,J,K,L,M and X, and forms trimeric complexes. [4Fe-4S] cluster is required as a cofactor.

It localises to the cellular thylakoid membrane. The enzyme catalyses reduced [plastocyanin] + hnu + oxidized [2Fe-2S]-[ferredoxin] = oxidized [plastocyanin] + reduced [2Fe-2S]-[ferredoxin]. Functionally, apoprotein for the two 4Fe-4S centers FA and FB of photosystem I (PSI); essential for photochemical activity. FB is the terminal electron acceptor of PSI, donating electrons to ferredoxin. The C-terminus interacts with PsaA/B/D and helps assemble the protein into the PSI complex. Required for binding of PsaD and PsaE to PSI. PSI is a plastocyanin/cytochrome c6-ferredoxin oxidoreductase, converting photonic excitation into a charge separation, which transfers an electron from the donor P700 chlorophyll pair to the spectroscopically characterized acceptors A0, A1, FX, FA and FB in turn. The polypeptide is Photosystem I iron-sulfur center (Prochlorococcus marinus (strain SARG / CCMP1375 / SS120)).